Reading from the N-terminus, the 211-residue chain is ATP phosphoribosyltransferase (211 aa).

This sequence belongs to the ATP phosphoribosyltransferase family. Short subfamily. As to quaternary structure, heteromultimer composed of HisG and HisZ subunits.

The protein localises to the cytoplasm. It carries out the reaction 1-(5-phospho-beta-D-ribosyl)-ATP + diphosphate = 5-phospho-alpha-D-ribose 1-diphosphate + ATP. Its pathway is amino-acid biosynthesis; L-histidine biosynthesis; L-histidine from 5-phospho-alpha-D-ribose 1-diphosphate: step 1/9. Functionally, catalyzes the condensation of ATP and 5-phosphoribose 1-diphosphate to form N'-(5'-phosphoribosyl)-ATP (PR-ATP). Has a crucial role in the pathway because the rate of histidine biosynthesis seems to be controlled primarily by regulation of HisG enzymatic activity. The protein is ATP phosphoribosyltransferase of Bacillus mycoides (strain KBAB4) (Bacillus weihenstephanensis).